The sequence spans 106 residues: uncharacterized protein (106 aa).

It belongs to the HesB/IscA family.

This is an uncharacterized protein from Rhodobacter capsulatus (Rhodopseudomonas capsulata).